We begin with the raw amino-acid sequence, 642 residues long: Arginine--tRNA ligase, chloroplastic/mitochondrial (642 aa).

The transit peptide at Met1–Met53 directs the protein to the chloroplast and mitochondrion. An N-acetylalanine modification is found at Ala54. A 'HIGH' region motif is present at residues Pro190–Leu201.

Belongs to the class-I aminoacyl-tRNA synthetase family.

Its subcellular location is the plastid. It is found in the chloroplast. The protein localises to the mitochondrion. It catalyses the reaction tRNA(Arg) + L-arginine + ATP = L-arginyl-tRNA(Arg) + AMP + diphosphate. Its function is as follows. Forms part of a macromolecular complex that catalyzes the attachment of specific amino acids to cognate tRNAs during protein synthesis. This Arabidopsis thaliana (Mouse-ear cress) protein is Arginine--tRNA ligase, chloroplastic/mitochondrial.